A 265-amino-acid chain; its full sequence is Exosome complex component Rrp4 (265 aa).

The region spanning 65-137 (GDNVIGKIVD…EVNNIDLTTK (73 aa)) is the S1 motif domain. The 59-residue stretch at 147–205 (KGGQIVKITPSRVPRVIGRGGSMINMIKKLTMTRIIVGQNGWIWVNGKNEALEKLAIEA) folds into the KH domain. The segment covering 241–254 (EIPELEEEPQEETE) has biased composition (acidic residues). A disordered region spans residues 241 to 265 (EIPELEEEPQEETEVNNNDGETRRT).

Belongs to the RRP4 family. As to quaternary structure, component of the archaeal exosome complex. Forms a trimer of Rrp4 and/or Csl4 subunits. The trimer associates with a hexameric ring-like arrangement composed of 3 Rrp41-Rrp42 heterodimers.

The protein resides in the cytoplasm. Functionally, non-catalytic component of the exosome, which is a complex involved in RNA degradation. Increases the RNA binding and the efficiency of RNA degradation. Confers strong poly(A) specificity to the exosome. This Pyrococcus horikoshii (strain ATCC 700860 / DSM 12428 / JCM 9974 / NBRC 100139 / OT-3) protein is Exosome complex component Rrp4.